The sequence spans 391 residues: Inositol-tetrakisphosphate 1-kinase 2 (391 aa).

The 1D-myo-inositol 1,3,4-trisphosphate site is built by lysine 90 and lysine 132. ATP contacts are provided by arginine 167 and lysine 217. One can recognise an ATP-grasp domain in the interval 178–384 (KLSDCSGSLF…FFQNLAQVKY (207 aa)). Residues histidine 228 and lysine 260 each coordinate 1D-myo-inositol 1,3,4-trisphosphate. Residues 249-260 (QEFVNHGGVMFK) and serine 275 contribute to the ATP site. The Mg(2+) site is built by aspartate 340, aspartate 355, and asparagine 357. Asparagine 357 provides a ligand contact to 1D-myo-inositol 1,3,4-trisphosphate.

It belongs to the ITPK1 family. Monomer. Requires Mg(2+) as cofactor. In terms of tissue distribution, expressed in seedling roots, cotyledons, rosette leaves, cauline leaves, stems, flowers, siliques and seeds.

The enzyme catalyses 1D-myo-inositol 3,4,5,6-tetrakisphosphate + ATP = 1D-myo-inositol 1,3,4,5,6-pentakisphosphate + ADP + H(+). The catalysed reaction is 1D-myo-inositol 1,3,4-trisphosphate + ATP = 1D-myo-inositol 1,3,4,5-tetrakisphosphate + ADP + H(+). It catalyses the reaction 1D-myo-inositol 1,3,4-trisphosphate + ATP = 1D-myo-inositol 1,3,4,6-tetrakisphosphate + ADP + H(+). In terms of biological role, kinase that can phosphorylate various inositol polyphosphate such as Ins(3,4,5,6)P4 or Ins(1,3,4)P3. Phosphorylates Ins(3,4,5,6)P4 to form InsP5. This reaction is thought to have regulatory importance, since Ins(3,4,5,6)P4 is an inhibitor of plasma membrane Ca(2+)-activated Cl(-) channels, while Ins(1,3,4,5,6)P5 is not. Also phosphorylates Ins(1,3,4)P3 or a racemic mixture of Ins(1,4,6)P3 and Ins(3,4,6)P3 to form InsP4. Ins(1,3,4,6)P4 is an essential molecule in the hexakisphosphate (InsP6) pathway. Plays a role in seed coat development and lipid polyester barrier formation. The protein is Inositol-tetrakisphosphate 1-kinase 2 (ITPK2) of Arabidopsis thaliana (Mouse-ear cress).